The chain runs to 602 residues: MTPLDHIRNFSIIAHIDHGKSTLADRLIQTTGGLTAREMSEQVLDNMDIEKERGITIKAQTVRLDYTAKDGQKYVLNLMDTPGHVDFAYEVSRSLAACEGALLVVDASQGVEAQTLANVYQSIEYDHEIVPVINKIDLPAAEPEKVKQEIEEIIGLPADDAVLASAKSGIGIDDILEALVKRIPAPKGDINAPLKAMLVDSWYDPYLGVVILVRIIDGSLKKGQQIRFMQAGTTHLIDRVGCFRPKIEILDSLGPGEIGFITAQIKEVSQTAVGDTITDAKNPTSTPLPGFKQVQPVVFCGLFPVDAADFDKLKESLGKLRLNDASFSFEAENSAALGFGFRCGFLGLLHLEIIQERLSREYDLDLITTAPSVVYHLNMTHGEGSIDLHNPADMPDVTRIDSIDEPWIEATIYVPDQYLGAVLKLCQDRRGIQKDMTYVGGRVQLLYELPLNEVVFDFYDRLKSISRGYASFDYHQIGYREGDLVKMTIMVNGEVVDALSMIVHRHAAEGRGRQMCQRMKDLIPRHLFKIPIQAAIGGKVIARETIGAMRKDVTAKCYGGDISRKKKLLEKQKEGKKRMRQYGSVDIPQEAFIAALRMGDDS.

The region spanning 5 to 187 is the tr-type G domain; that stretch reads DHIRNFSIIA…ALVKRIPAPK (183 aa). GTP contacts are provided by residues 17-22 and 134-137; these read DHGKST and NKID.

This sequence belongs to the TRAFAC class translation factor GTPase superfamily. Classic translation factor GTPase family. LepA subfamily.

It is found in the cell inner membrane. It carries out the reaction GTP + H2O = GDP + phosphate + H(+). In terms of biological role, required for accurate and efficient protein synthesis under certain stress conditions. May act as a fidelity factor of the translation reaction, by catalyzing a one-codon backward translocation of tRNAs on improperly translocated ribosomes. Back-translocation proceeds from a post-translocation (POST) complex to a pre-translocation (PRE) complex, thus giving elongation factor G a second chance to translocate the tRNAs correctly. Binds to ribosomes in a GTP-dependent manner. This chain is Elongation factor 4, found in Zymomonas mobilis subsp. mobilis (strain ATCC 31821 / ZM4 / CP4).